The chain runs to 503 residues: AMP phosphorylase (503 aa).

AMP contacts are provided by residues glycine 168, 194 to 199 (SRAITG), and serine 203. Residue aspartate 256 is the Proton donor of the active site. The AMP site is built by serine 264 and lysine 288.

Belongs to the thymidine/pyrimidine-nucleoside phosphorylase family. Type 2 subfamily.

The enzyme catalyses AMP + phosphate = alpha-D-ribose 1,5-bisphosphate + adenine. It catalyses the reaction CMP + phosphate = cytosine + alpha-D-ribose 1,5-bisphosphate. The catalysed reaction is UMP + phosphate = alpha-D-ribose 1,5-bisphosphate + uracil. In terms of biological role, catalyzes the conversion of AMP and phosphate to adenine and ribose 1,5-bisphosphate (R15P). Exhibits phosphorylase activity toward CMP and UMP in addition to AMP. Functions in an archaeal AMP degradation pathway, together with R15P isomerase and RubisCO. This Methanocella arvoryzae (strain DSM 22066 / NBRC 105507 / MRE50) protein is AMP phosphorylase.